The following is a 365-amino-acid chain: Mitogen-activated protein kinase 13 (365 aa).

A Protein kinase domain is found at 25 to 308 (YVSPTHVGSG…AAQALTHPFF (284 aa)). 31–39 (VGSGAYGSV) serves as a coordination point for ATP. Ser47 is modified (phosphoserine). Lys54 is an ATP binding site. Asp150 (proton acceptor) is an active-site residue. Thr180 bears the Phosphothreonine; by MAP2K3, MAP2K4, MAP2K6 and MAP2K7 mark. The TXY motif lies at 180–182 (TGY). A Phosphotyrosine; by MAP2K3, MAP2K4, MAP2K6 and MAP2K7 modification is found at Tyr182. Ser350 is subject to Phosphoserine.

This sequence belongs to the protein kinase superfamily. CMGC Ser/Thr protein kinase family. MAP kinase subfamily. As to quaternary structure, interacts with MAPK8IP2. Mg(2+) is required as a cofactor. In terms of processing, dually phosphorylated on Thr-180 and Tyr-182 by MAP2K3/MKK3, MAP2K4/MKK4, MAP2K6/MKK6 and MAP2K7/MKK7, which activates the enzyme. Dephosphorylated by dual specificity phosphatase DUSP1.

It catalyses the reaction L-seryl-[protein] + ATP = O-phospho-L-seryl-[protein] + ADP + H(+). The catalysed reaction is L-threonyl-[protein] + ATP = O-phospho-L-threonyl-[protein] + ADP + H(+). Its activity is regulated as follows. Activated by phosphorylation on threonine and tyrosine by dual specificity kinases, MAP2K3/MKK3, MAP2K6/MKK6, MAP2K4/MKK4 and MAP2K7/MKK7. Activation by ultraviolet radiation, hyperosmotic shock, anisomycin or by TNF-alpha is mediated by MAP2K3/MKK3. Inhibited by dual specificity phosphatase DUSP1. In terms of biological role, serine/threonine kinase which acts as an essential component of the MAP kinase signal transduction pathway. MAPK13 is one of the four p38 MAPKs which play an important role in the cascades of cellular responses evoked by extracellular stimuli such as pro-inflammatory cytokines or physical stress leading to direct activation of transcription factors such as ELK1 and ATF2. Accordingly, p38 MAPKs phosphorylate a broad range of proteins and it has been estimated that they may have approximately 200 to 300 substrates each. MAPK13 is one of the less studied p38 MAPK isoforms. Some of the targets are downstream kinases such as MAPKAPK2, which are activated through phosphorylation and further phosphorylate additional targets. Plays a role in the regulation of protein translation by phosphorylating and inactivating EEF2K. Involved in cytoskeletal remodeling through phosphorylation of MAPT and STMN1. Mediates UV irradiation induced up-regulation of the gene expression of CXCL14. Plays an important role in the regulation of epidermal keratinocyte differentiation, apoptosis and skin tumor development. Phosphorylates the transcriptional activator MYB in response to stress which leads to rapid MYB degradation via a proteasome-dependent pathway. MAPK13 also phosphorylates and down-regulates PRKD1 during regulation of insulin secretion in pancreatic beta cells. The protein is Mitogen-activated protein kinase 13 (MAPK13) of Pan troglodytes (Chimpanzee).